Consider the following 388-residue polypeptide: Succinate--CoA ligase [ADP-forming] subunit beta (388 aa).

In terms of domain architecture, ATP-grasp spans 9–244; it reads KQLFAEYGLP…PSQDDAREAH (236 aa). ATP contacts are provided by residues lysine 46, 53–55, glutamate 99, threonine 102, and glutamate 107; that span reads GRG. 2 residues coordinate Mg(2+): asparagine 199 and aspartate 213. Substrate is bound by residues asparagine 264 and 321–323; that span reads GIV.

This sequence belongs to the succinate/malate CoA ligase beta subunit family. In terms of assembly, heterotetramer of two alpha and two beta subunits. Mg(2+) serves as cofactor.

It carries out the reaction succinate + ATP + CoA = succinyl-CoA + ADP + phosphate. The enzyme catalyses GTP + succinate + CoA = succinyl-CoA + GDP + phosphate. The protein operates within carbohydrate metabolism; tricarboxylic acid cycle; succinate from succinyl-CoA (ligase route): step 1/1. Its function is as follows. Succinyl-CoA synthetase functions in the citric acid cycle (TCA), coupling the hydrolysis of succinyl-CoA to the synthesis of either ATP or GTP and thus represents the only step of substrate-level phosphorylation in the TCA. The beta subunit provides nucleotide specificity of the enzyme and binds the substrate succinate, while the binding sites for coenzyme A and phosphate are found in the alpha subunit. The chain is Succinate--CoA ligase [ADP-forming] subunit beta from Pseudomonas aeruginosa (strain LESB58).